The sequence spans 637 residues: Transmembrane 9 superfamily member 10 (637 aa).

Residues 1-23 (MAKVRILIFTLVLFFSLNVHIHG) form the signal peptide. Topologically, residues 24–274 (FYLPGVAPQD…YLLMADDQIH (251 aa)) are lumenal. A helical membrane pass occupies residues 275 to 295 (WFSIVNSMMIVLFLSGMVAMI). The Cytoplasmic portion of the chain corresponds to 296 to 344 (MLRTLYRDISNYNQLESHEEALEETGWKLVHGDVFRPPTNPELLCVYAG). A helical transmembrane segment spans residues 345-365 (TGVQCFGMILVTMIFACLGFL). At 366 to 370 (SPSNR) the chain is on the lumenal side. Residues 371 to 391 (GGLMTAMLLLWVFMGLLAGYA) form a helical membrane-spanning segment. Topologically, residues 392 to 411 (SSRLYKTLRGTEWKRNALKT) are cytoplasmic. Residues 412 to 432 (AFMFPATVFVAFFVLNAIIWG) traverse the membrane as a helical segment. At 433–444 (QKSSGAVPFGTM) the chain is on the lumenal side. Residues 445-465 (FALVVLWFGISVPLVFIGGYI) traverse the membrane as a helical segment. Topologically, residues 466–494 (GFRKPAPEDPVKTNKIPRQIPTQAWYMNP) are cytoplasmic. A helical membrane pass occupies residues 495-515 (IFSILIGGILPFGAVFIELFF). At 516–527 (ILTSIWLHQFYY) the chain is on the lumenal side. Residues 528–548 (IFGFLFIVFIILIITCAEITV) form a helical membrane-spanning segment. Residues 549 to 566 (VLCYFQLCSEDYQWWWRS) are Cytoplasmic-facing. The chain crosses the membrane as a helical span at residues 567 to 587 (YLTSGSSAVYLFLYAVFYFYT). Residues 588-593 (KLEITK) lie on the Lumenal side of the membrane. A helical membrane pass occupies residues 594-614 (LVSAVLYFGYMLIVSYVFFVF). The Cytoplasmic segment spans residues 615 to 637 (TGAIGFYACFWFTRLIYSSVKID). The short motif at 626–631 (FTRLIY) is the Endoplasmic reticulum export signal element. The Golgi retention signal motif lies at 635–637 (KID).

The protein belongs to the nonaspanin (TM9SF) (TC 9.A.2) family.

Its subcellular location is the endosome membrane. It is found in the golgi apparatus membrane. The sequence is that of Transmembrane 9 superfamily member 10 from Arabidopsis thaliana (Mouse-ear cress).